The chain runs to 546 residues: Glucose-6-phosphate isomerase (546 aa).

Glu358 acts as the Proton donor in catalysis. Residues His389 and Lys504 contribute to the active site.

It belongs to the GPI family.

It is found in the cytoplasm. The enzyme catalyses alpha-D-glucose 6-phosphate = beta-D-fructose 6-phosphate. Its pathway is carbohydrate biosynthesis; gluconeogenesis. It participates in carbohydrate degradation; glycolysis; D-glyceraldehyde 3-phosphate and glycerone phosphate from D-glucose: step 2/4. Catalyzes the reversible isomerization of glucose-6-phosphate to fructose-6-phosphate. The polypeptide is Glucose-6-phosphate isomerase (Desulfosudis oleivorans (strain DSM 6200 / JCM 39069 / Hxd3) (Desulfococcus oleovorans)).